Here is a 153-residue protein sequence, read N- to C-terminus: Troponin C (153 aa).

EF-hand domains lie at 9–44 (EQVQMLRKAFDMFDRDKKGYIHTNMVSTILRTLGQT), 45–80 (FEENDLQQLIIEIDADGSGELEFDEFLTLTARFLVE), 85–120 (AMQEELREAFRMYDKEGNGYIPTSALREILRALDDK), and 121–153 (LTEDELDEMIAEIDTDGSGTVDFDEFMEMMTGD). Aspartate 58, aspartate 60, serine 62, glutamate 64, and glutamate 69 together coordinate Ca(2+). Residues aspartate 134, aspartate 136, serine 138, threonine 140, and glutamate 145 each contribute to the Ca(2+) site.

The protein belongs to the troponin C family.

Troponin is the central regulatory protein of striated muscle contraction. Tn consists of three components: Tn-I which is the inhibitor of actomyosin ATPase, Tn-T which contains the binding site for tropomyosin and Tn-C. The binding of calcium to Tn-C abolishes the inhibitory action of Tn on actin filaments. The chain is Troponin C from Tyrophagus putrescentiae (Mold mite).